The sequence spans 181 residues: Peptidyl-tRNA hydrolase (181 aa).

Y14 is a tRNA binding site. The active-site Proton acceptor is the H19. TRNA is bound by residues Y62, N64, and N108.

It belongs to the PTH family. Monomer.

It is found in the cytoplasm. The enzyme catalyses an N-acyl-L-alpha-aminoacyl-tRNA + H2O = an N-acyl-L-amino acid + a tRNA + H(+). Its function is as follows. Hydrolyzes ribosome-free peptidyl-tRNAs (with 1 or more amino acids incorporated), which drop off the ribosome during protein synthesis, or as a result of ribosome stalling. Functionally, catalyzes the release of premature peptidyl moieties from peptidyl-tRNA molecules trapped in stalled 50S ribosomal subunits, and thus maintains levels of free tRNAs and 50S ribosomes. This Campylobacter jejuni subsp. jejuni serotype O:23/36 (strain 81-176) protein is Peptidyl-tRNA hydrolase.